The sequence spans 745 residues: Immunoglobulin superfamily containing leucine-rich repeat protein 2 (745 aa).

Residues methionine 1–alanine 19 form the signal peptide. The LRRNT domain occupies cysteine 20–alanine 51. Over cysteine 20–serine 589 the chain is Extracellular. 2 N-linked (GlcNAc...) asparagine glycosylation sites follow: asparagine 52 and asparagine 73. LRR repeat units lie at residues asparagine 52–asparagine 73, glutamine 76–valine 97, glutamine 100–serine 123, alanine 124–alanine 145, and aspartate 148–alanine 169. N-linked (GlcNAc...) asparagine glycosylation occurs at asparagine 121. The 52-residue stretch at asparagine 181–proline 232 folds into the LRRCT domain. The Ig-like domain occupies proline 233–threonine 372. Cysteine 260 and cysteine 356 are disulfide-bonded. Basic and acidic residues predominate over residues lysine 290–aspartate 300. The segment at lysine 290 to proline 328 is disordered. Positions threonine 317–proline 328 are enriched in pro residues. N-linked (GlcNAc...) asparagine glycosylation is found at asparagine 338 and asparagine 365. The segment at alanine 376–leucine 423 is disordered. 2 N-linked (GlcNAc...) asparagine glycosylation sites follow: asparagine 474 and asparagine 563. The helical transmembrane segment at leucine 590–glycine 610 threads the bilayer. Over alanine 611–glycine 745 the chain is Cytoplasmic. The tract at residues serine 654–alanine 697 is disordered. Residues glycine 665–glutamine 683 show a composition bias toward acidic residues. Tyrosine 719 bears the Phosphotyrosine mark. Phosphoserine is present on serine 720.

As to quaternary structure, homomultimer. Interacts with NTRK1/TrkA. At 11.5 dpc, expressed in spinal nerves, their roots and the ventral spinal cord. At 12.5 dpc, detected in the ventral spinal cord, dorsal root ganglia (DRG), dorsal and ventral roots and sympathetic chain ganglia. At 12.5 dpc, expressed in almost all motor neurons which also express RET and in almost all DRG sensory neurons which also express NTRK1. At 18.5 dpc, expressed only in a subset of NTRK1-expressing neurons but still expressed in nearly all RET-expressing neurons.

It is found in the cell membrane. Its function is as follows. Required for axon extension during neural development. The protein is Immunoglobulin superfamily containing leucine-rich repeat protein 2 (Islr2) of Mus musculus (Mouse).